The primary structure comprises 219 residues: Large ribosomal subunit protein uL1 (219 aa).

This sequence belongs to the universal ribosomal protein uL1 family. As to quaternary structure, part of the 50S ribosomal subunit.

Probably involved in E site tRNA release. Binds directly to 23S rRNA. Functionally, protein L1 is also a translational repressor protein, it controls the translation of its operon by binding to its mRNA. The chain is Large ribosomal subunit protein uL1 from Methanocaldococcus jannaschii (strain ATCC 43067 / DSM 2661 / JAL-1 / JCM 10045 / NBRC 100440) (Methanococcus jannaschii).